Reading from the N-terminus, the 300-residue chain is Lysenin-related protein 3 (300 aa).

Positions 12–35 are N-terminal cap domain; it reads EEIEVDVVAVWKEGYVYENRGDTS. The beta-hairpin domain stretch occupies residues 36-109; sequence VEQKITMTKG…SQVIEHTVTI (74 aa). Residues 110 to 158 form an N-terminal cap domain region; sequence PPTSKFTRWKLNADVGGTDIEYMYLIDEVTPISVTQTIPQVIRSRAKIL. Residues 159-299 form a C-terminal receptor-binding domain region; that stretch reads VGRQIHLGTT…EDKWILEVVN (141 aa). The an N-(acyl)-sphingosylphosphocholine site is built by Lys-187, Ser-229, Tyr-235, and Tyr-284. An intrachain disulfide couples Cys-274 to Cys-285.

This sequence belongs to the lysenin family. In terms of assembly, binds to sphingomyelin as a monomer by using its C-terminal domain. Forms a nonamer when sphingomyelin/LRP-3 ratio is lower than ca 500. Oligomerization, but not binding, is influenced by the fluidity of sphingomyelin. As to expression, expressed by coelomocytes.

It localises to the secreted. Its subcellular location is the target cell membrane. Its function is as follows. Pore-forming toxin that specifically binds sphingomyelin in the plasma membrane of various cells. Has antibacterial and hemolytic activity. This Eisenia fetida (Red wiggler worm) protein is Lysenin-related protein 3.